Here is a 260-residue protein sequence, read N- to C-terminus: MTSNQRMLFYSCIAKGTVILAEFASKEEPGIEDLALRCIENVPPHHSMISHTVHKRTYALIIDGLFSYFAILDEVVAKSESVWLFNRLKSATESLMEDGSTADSLDNPTQHCLQSKLDPVFAEIAAIGGNHNKDLELEFGSPRSIAREIKSNNQSLDSSKGRKGGALMPLLGKPLRVLKNKKRLQTEAKSEGHWNEKKMDLGGGGKGVRNGLIHDHHHRQKAKQIWRKHVWIVLMFDLCICLVLFGIWLWICQGFQCIDG.

One can recognise a Longin domain in the interval 12–114 (CIAKGTVILA…LDNPTQHCLQ (103 aa)). A helical; Anchor for type IV membrane protein transmembrane segment spans residues 231-251 (WIVLMFDLCICLVLFGIWLWI).

This sequence belongs to the synaptobrevin family.

It is found in the membrane. Functionally, non-SNARE longin protein involved in membrane-trafficking machinery. This Arabidopsis thaliana (Mouse-ear cress) protein is Phytolongin Phyl2.1.